The following is a 64-amino-acid chain: DNA gyrase inhibitor YacG (64 aa).

Zn(2+)-binding residues include Cys-9, Cys-12, Cys-28, and Cys-32. A disordered region spans residues 42 to 64; sequence DEENAIPGAPDMSDSDGWSEEQY. The segment covering 54-64 has biased composition (acidic residues); sequence SDSDGWSEEQY.

This sequence belongs to the DNA gyrase inhibitor YacG family. As to quaternary structure, interacts with GyrB. Zn(2+) is required as a cofactor.

Functionally, inhibits all the catalytic activities of DNA gyrase by preventing its interaction with DNA. Acts by binding directly to the C-terminal domain of GyrB, which probably disrupts DNA binding by the gyrase. The polypeptide is DNA gyrase inhibitor YacG (Vibrio vulnificus (strain YJ016)).